Reading from the N-terminus, the 298-residue chain is 4-hydroxy-tetrahydrodipicolinate synthase (298 aa).

Pyruvate is bound at residue threonine 51. Tyrosine 139 acts as the Proton donor/acceptor in catalysis. The active-site Schiff-base intermediate with substrate is lysine 167. Isoleucine 209 contributes to the pyruvate binding site.

This sequence belongs to the DapA family. As to quaternary structure, homotetramer; dimer of dimers.

The protein localises to the cytoplasm. It catalyses the reaction L-aspartate 4-semialdehyde + pyruvate = (2S,4S)-4-hydroxy-2,3,4,5-tetrahydrodipicolinate + H2O + H(+). It functions in the pathway amino-acid biosynthesis; L-lysine biosynthesis via DAP pathway; (S)-tetrahydrodipicolinate from L-aspartate: step 3/4. In terms of biological role, catalyzes the condensation of (S)-aspartate-beta-semialdehyde [(S)-ASA] and pyruvate to 4-hydroxy-tetrahydrodipicolinate (HTPA). The protein is 4-hydroxy-tetrahydrodipicolinate synthase of Pasteurella multocida (strain Pm70).